Reading from the N-terminus, the 697-residue chain is Heat shock protein homolog SSE1 (697 aa).

Low complexity predominate over residues 664–674; that stretch reads EMAEKLAAQRA. Positions 664–697 are disordered; it reads EMAEKLAAQRAAEQKAQESKAESDKDAEGDIDLD. Residues 675–691 are compositionally biased toward basic and acidic residues; the sequence is AEQKAQESKAESDKDAE.

The protein belongs to the heat shock protein 70 family.

The protein localises to the cytoplasm. The chain is Heat shock protein homolog SSE1 (SSE1) from Eremothecium gossypii (strain ATCC 10895 / CBS 109.51 / FGSC 9923 / NRRL Y-1056) (Yeast).